The following is a 462-amino-acid chain: UDP-N-acetylmuramoylalanine--D-glutamate ligase (462 aa).

Position 120–126 (120–126 (GTNGKTT)) interacts with ATP.

Belongs to the MurCDEF family.

It is found in the cytoplasm. The enzyme catalyses UDP-N-acetyl-alpha-D-muramoyl-L-alanine + D-glutamate + ATP = UDP-N-acetyl-alpha-D-muramoyl-L-alanyl-D-glutamate + ADP + phosphate + H(+). The protein operates within cell wall biogenesis; peptidoglycan biosynthesis. Its function is as follows. Cell wall formation. Catalyzes the addition of glutamate to the nucleotide precursor UDP-N-acetylmuramoyl-L-alanine (UMA). The sequence is that of UDP-N-acetylmuramoylalanine--D-glutamate ligase from Bdellovibrio bacteriovorus (strain ATCC 15356 / DSM 50701 / NCIMB 9529 / HD100).